We begin with the raw amino-acid sequence, 369 residues long: Cystathionine gamma-synthase (369 aa).

Lysine 200 is subject to N6-(pyridoxal phosphate)lysine.

It belongs to the trans-sulfuration enzymes family. As to quaternary structure, homotetramer. Pyridoxal 5'-phosphate serves as cofactor.

The protein resides in the cytoplasm. The catalysed reaction is O-succinyl-L-homoserine + L-cysteine = L,L-cystathionine + succinate + H(+). Functionally, catalyzes the formation of L-cystathionine from O-succinyl-L-homoserine (OSHS) and L-cysteine, via a gamma-replacement reaction. In the absence of thiol, catalyzes gamma-elimination to form 2-oxobutanoate, succinate and ammonia. The protein is Cystathionine gamma-synthase (metB) of Haemophilus influenzae (strain ATCC 51907 / DSM 11121 / KW20 / Rd).